Consider the following 458-residue polypeptide: Chromosomal replication initiator protein DnaA (458 aa).

Positions 1–93 (MKTELSEVWQ…NVIEDPAAEP (93 aa)) are domain I, interacts with DnaA modulators. The domain II stretch occupies residues 94–119 (VDAPNVADLPAGTSAPAAEQNARLLG). The domain III, AAA+ region stretch occupies residues 120–336 (YINPKYTFET…GALTRVVAYA (217 aa)). Positions 164, 166, 167, and 168 each coordinate ATP. The segment at 337–458 (NMLKCPLTYD…EQLIARIRAE (122 aa)) is domain IV, binds dsDNA.

It belongs to the DnaA family. In terms of assembly, oligomerizes as a right-handed, spiral filament on DNA at oriC.

Its subcellular location is the cytoplasm. Its function is as follows. Plays an essential role in the initiation and regulation of chromosomal replication. ATP-DnaA binds to the origin of replication (oriC) to initiate formation of the DNA replication initiation complex once per cell cycle. Binds the DnaA box (a 9 base pair repeat at the origin) and separates the double-stranded (ds)DNA. Forms a right-handed helical filament on oriC DNA; dsDNA binds to the exterior of the filament while single-stranded (ss)DNA is stabiized in the filament's interior. The ATP-DnaA-oriC complex binds and stabilizes one strand of the AT-rich DNA unwinding element (DUE), permitting loading of DNA polymerase. After initiation quickly degrades to an ADP-DnaA complex that is not apt for DNA replication. Binds acidic phospholipids. This Symbiobacterium thermophilum (strain DSM 24528 / JCM 14929 / IAM 14863 / T) protein is Chromosomal replication initiator protein DnaA.